We begin with the raw amino-acid sequence, 257 residues long: 3-dehydroquinate dehydratase (257 aa).

Residues 50–52 and Arg-86 contribute to the 3-dehydroquinate site; that span reads EWR. The Proton donor/acceptor role is filled by His-147. Lys-174 acts as the Schiff-base intermediate with substrate in catalysis. 3-dehydroquinate-binding residues include Arg-216, Ser-235, and Gln-239.

Belongs to the type-I 3-dehydroquinase family. As to quaternary structure, homodimer.

It catalyses the reaction 3-dehydroquinate = 3-dehydroshikimate + H2O. It participates in metabolic intermediate biosynthesis; chorismate biosynthesis; chorismate from D-erythrose 4-phosphate and phosphoenolpyruvate: step 3/7. In terms of biological role, involved in the third step of the chorismate pathway, which leads to the biosynthesis of aromatic amino acids. Catalyzes the cis-dehydration of 3-dehydroquinate (DHQ) and introduces the first double bond of the aromatic ring to yield 3-dehydroshikimate. The polypeptide is 3-dehydroquinate dehydratase (Geobacillus thermodenitrificans (strain NG80-2)).